The chain runs to 319 residues: Zinc finger protein C19B12.07c (319 aa).

The segment at 146-170 (FRCLCCHVPCKNKKLLREHMNNKRH) adopts a C2H2-type zinc-finger fold.

It belongs to the ZNF277 family.

The protein resides in the nucleus. The polypeptide is Zinc finger protein C19B12.07c (Schizosaccharomyces pombe (strain 972 / ATCC 24843) (Fission yeast)).